Reading from the N-terminus, the 573-residue chain is DNA ligase (573 aa).

Glu248 contacts ATP. The N6-AMP-lysine intermediate role is filled by Lys250. ATP is bound by residues Arg255, Arg270, Glu299, Phe340, Arg432, and Lys438.

Belongs to the ATP-dependent DNA ligase family. The cofactor is Mg(2+).

The catalysed reaction is ATP + (deoxyribonucleotide)n-3'-hydroxyl + 5'-phospho-(deoxyribonucleotide)m = (deoxyribonucleotide)n+m + AMP + diphosphate.. Its function is as follows. DNA ligase that seals nicks in double-stranded DNA during DNA replication, DNA recombination and DNA repair. This Methanocaldococcus jannaschii (strain ATCC 43067 / DSM 2661 / JAL-1 / JCM 10045 / NBRC 100440) (Methanococcus jannaschii) protein is DNA ligase.